Consider the following 366-residue polypeptide: Type 2 DNA topoisomerase 6 subunit A (366 aa).

The region spanning 7-146 (SDETEARDQL…FHMRPEESGA (140 aa)) is the Topo IIA-type catalytic domain. Tyr-101 (O-(5'-phospho-DNA)-tyrosine intermediate) is an active-site residue. The Mg(2+) site is built by Glu-199 and Asp-251.

It belongs to the TOP6A family. Homodimer. Heterotetramer of two Top6A and two Top6B chains. Requires Mg(2+) as cofactor.

It catalyses the reaction ATP-dependent breakage, passage and rejoining of double-stranded DNA.. Its function is as follows. Relaxes both positive and negative superturns and exhibits a strong decatenase activity. The chain is Type 2 DNA topoisomerase 6 subunit A from Halobacterium salinarum (strain ATCC 700922 / JCM 11081 / NRC-1) (Halobacterium halobium).